The sequence spans 277 residues: Ribosome-inactivating protein luffin-alpha (277 aa).

A signal peptide spans 1–19 (MKRFTVLILAIFVAASTVE). Residue Glu179 is part of the active site.

Belongs to the ribosome-inactivating protein family. Type 1 RIP subfamily.

The enzyme catalyses Endohydrolysis of the N-glycosidic bond at one specific adenosine on the 28S rRNA.. The protein is Ribosome-inactivating protein luffin-alpha of Luffa aegyptiaca (Sponge gourd).